Consider the following 23-residue polypeptide: Apolipophorin-1 (23 aa).

Residues 1-15 (SVKSEVDNFDKHLKA) are compositionally biased toward basic and acidic residues. The tract at residues 1 to 23 (SVKSEVDNFDKHLKAESAPFNNE) is disordered.

As to expression, expressed in hemolymph.

Its subcellular location is the secreted. In terms of biological role, constitutes the major component of lipophorin, which mediates transport for various types of lipids in hemolymph. Acts by forming lipoprotein particles that bind lipoproteins and lipids. The polypeptide is Apolipophorin-1 (Galleria mellonella (Greater wax moth)).